The primary structure comprises 502 residues: MWGGCIQFRISVPGAKIICFKGHHMSRMSIRGQGQVTGKRSCHLHPLLRCAKGLLLCRPAAGLRHLQNQQNEPSQDPHQCADSCPALHSDRNHLNKEAEAMEGQNPTCSRHESAYPIQSQVSKSKKQRNYVDGAAVDDLKNLWDRLQTLQQSLTEMPYAEGLKPLKNFTSFEELLSMGGDSLLNDLLDIQDSITQCCIRASKYLNKEGNCTSLNYYKQPFIAAVYGPTGCGKSQLLRNLMSAQLIVPTPETVFFITPQVDMIPPQEIAAWETQICEGNFLAGPENTVVPQSGSIMPRFIQMSYAQLTKDENYDVTSPNNIFANAASKGPIAIVMDECMEDLGGNRGIAKFFHAFPSKLLDRFPKCTGYSVIVVLHNMNPRRDQGGNIANLKIQAKVHMISPKVHPSQLNRFINIYTKGQPTAISLLLKDIFNYHRLNTNFDWIVYNTEPIDNCMHWMYLSPQEGLIPMYLNIQGKLYQALERIHRTLTDRQRWTRYYHSKKK.

The tract at residues 99-122 is disordered; sequence EAMEGQNPTCSRHESAYPIQSQVS. 226 to 233 lines the ATP pocket; the sequence is GPTGCGKS. Residues 495–502 are DNA-binding; sequence RYYHSKKK.

The protein belongs to the adenoviridae packaging protein 1 family. Homodimer. Part of a genome packaging complex composed of packaging proteins 1, 2 and 3; this complex specifically binds to the packaging sequence on the left end of viral genomic DNA and performs packaging of the viral genome. Interacts with protein 33K.

The protein localises to the virion. Its subcellular location is the host nucleus. The protein resides in the host nucleoplasm. It localises to the host nucleolus. In terms of biological role, component of the packaging machinery which encapsidates the viral DNA into preformed capsids and transcriptional activator of the viral major late promoter (MLP). Binds, along with packaging proteins 2 and 3, to the specific packaging sequence on the left end of viral genomic DNA and displays ATPase activity thereby providing the power stroke of the packaging machinery. The activity of packaging protein IVa2 is stimulated by protein 33K which acts as a terminase. May be the protein that pumps DNA into the capsid powered by ATP hydrolysis. Specifically binds to the 5'-CG-3' nucleotides of the repeats making up the packaging sequence. Component of the DEF-A and DEF-B transcription factors that bind downstream elements of the major late promoter (MLP), and stimulate transcription from the MLP after initiation of viral DNA replication. DEF-A is a heterodimer packaging proteins 1 and 2 and DEF-B is a homodimer of packaging protein 1. This is Packaging protein 1 from Canis lupus familiaris (Dog).